Reading from the N-terminus, the 141-residue chain is Nucleoside triphosphatase NudI (141 aa).

The Nudix hydrolase domain occupies 1-141 (MRQRTIVCPL…RHTLALKGLL (141 aa)). The Nudix box signature appears at 38–59 (GGVEPGERIEEALRREVREELG).

The protein belongs to the Nudix hydrolase family. NudI subfamily. In terms of assembly, monomer. Mg(2+) serves as cofactor.

The catalysed reaction is a ribonucleoside 5'-triphosphate + H2O = a ribonucleoside 5'-phosphate + diphosphate + H(+). It catalyses the reaction a 2'-deoxyribonucleoside 5'-triphosphate + H2O = a 2'-deoxyribonucleoside 5'-phosphate + diphosphate + H(+). It carries out the reaction dUTP + H2O = dUMP + diphosphate + H(+). The enzyme catalyses dTTP + H2O = dTMP + diphosphate + H(+). The catalysed reaction is dCTP + H2O = dCMP + diphosphate + H(+). In terms of biological role, catalyzes the hydrolysis of nucleoside triphosphates, with a preference for pyrimidine deoxynucleoside triphosphates (dUTP, dTTP and dCTP). The polypeptide is Nucleoside triphosphatase NudI (Salmonella schwarzengrund (strain CVM19633)).